Reading from the N-terminus, the 98-residue chain is Large ribosomal subunit protein uL23 (98 aa).

Belongs to the universal ribosomal protein uL23 family. Part of the 50S ribosomal subunit. Contacts protein L29, and trigger factor when it is bound to the ribosome.

One of the early assembly proteins it binds 23S rRNA. One of the proteins that surrounds the polypeptide exit tunnel on the outside of the ribosome. Forms the main docking site for trigger factor binding to the ribosome. The chain is Large ribosomal subunit protein uL23 from Rickettsia typhi (strain ATCC VR-144 / Wilmington).